Reading from the N-terminus, the 336-residue chain is Dihydroorotate dehydrogenase (quinone) (336 aa).

Residues 62–66 (AGLDK) and threonine 86 each bind FMN. Lysine 66 provides a ligand contact to substrate. 111–115 (NRMGF) serves as a coordination point for substrate. Residues asparagine 139 and asparagine 172 each contribute to the FMN site. Substrate is bound at residue asparagine 172. The active-site Nucleophile is serine 175. Asparagine 177 contacts substrate. FMN-binding residues include lysine 217 and threonine 245. 246-247 (NT) contributes to the substrate binding site. FMN is bound by residues glycine 268, glycine 297, and 318 to 319 (YS).

The protein belongs to the dihydroorotate dehydrogenase family. Type 2 subfamily. As to quaternary structure, monomer. FMN serves as cofactor.

It is found in the cell membrane. It catalyses the reaction (S)-dihydroorotate + a quinone = orotate + a quinol. Its pathway is pyrimidine metabolism; UMP biosynthesis via de novo pathway; orotate from (S)-dihydroorotate (quinone route): step 1/1. Catalyzes the conversion of dihydroorotate to orotate with quinone as electron acceptor. This chain is Dihydroorotate dehydrogenase (quinone), found in Vibrio vulnificus (strain CMCP6).